The following is an 82-amino-acid chain: DNA-directed RNA polymerase subunit omega (82 aa).

The protein belongs to the RNA polymerase subunit omega family. In cyanobacteria the RNAP catalytic core is composed of 2 alpha, 1 beta, 1 beta', 1 gamma and 1 omega subunit. When a sigma factor is associated with the core the holoenzyme is formed, which can initiate transcription.

The enzyme catalyses RNA(n) + a ribonucleoside 5'-triphosphate = RNA(n+1) + diphosphate. Functionally, promotes RNA polymerase assembly. Latches the N- and C-terminal regions of the beta' subunit thereby facilitating its interaction with the beta and alpha subunits. This chain is DNA-directed RNA polymerase subunit omega, found in Synechococcus sp. (strain CC9902).